A 278-amino-acid chain; its full sequence is HTH-type transcriptional activator RhaS (278 aa).

The 99-residue stretch at 174–272 (NQLMAWLEDH…NWSPRDIRQG (99 aa)) folds into the HTH araC/xylS-type domain. DNA-binding regions (H-T-H motif) lie at residues 191-212 (EAVA…KQHT) and 239-262 (VTEI…RREF).

In terms of assembly, binds DNA as a dimer.

Its subcellular location is the cytoplasm. Activates expression of the rhaBAD and rhaT operons. This is HTH-type transcriptional activator RhaS from Salmonella paratyphi A (strain ATCC 9150 / SARB42).